Consider the following 128-residue polypeptide: Sulfurtransferase TusD (128 aa).

Residue cysteine 78 is the Cysteine persulfide intermediate of the active site.

This sequence belongs to the DsrE/TusD family. In terms of assembly, heterohexamer, formed by a dimer of trimers. The hexameric TusBCD complex contains 2 copies each of TusB, TusC and TusD. The TusBCD complex interacts with TusE.

The protein localises to the cytoplasm. Part of a sulfur-relay system required for 2-thiolation of 5-methylaminomethyl-2-thiouridine (mnm(5)s(2)U) at tRNA wobble positions. Accepts sulfur from TusA and transfers it in turn to TusE. The chain is Sulfurtransferase TusD from Shigella flexneri serotype 5b (strain 8401).